Reading from the N-terminus, the 465-residue chain is Argininosuccinate lyase (465 aa).

This sequence belongs to the lyase 1 family. Argininosuccinate lyase subfamily.

The protein localises to the cytoplasm. It catalyses the reaction 2-(N(omega)-L-arginino)succinate = fumarate + L-arginine. It participates in amino-acid biosynthesis; L-arginine biosynthesis; L-arginine from L-ornithine and carbamoyl phosphate: step 3/3. The protein is Argininosuccinate lyase of Rhodopseudomonas palustris (strain BisB18).